A 2380-amino-acid chain; its full sequence is Probable polyketide synthase 25 (2380 aa).

Residues 1-18 (MDNSYLNNPQFDINNGNK) are compositionally biased toward polar residues. A disordered region spans residues 1–29 (MDNSYLNNPQFDINNGNKEVTDDDNNKNN). In terms of domain architecture, Ketosynthase family 3 (KS3) spans 31-457 (DNLVAIVGVG…GSNCCLVLSQ (427 aa)). Catalysis depends on for beta-ketoacyl synthase activity residues cysteine 198, histidine 340, and histidine 380. Positions 649 to 682 (GIKASFMLGHSLGEVTTAYCSGMIDIDQLCYLIY) are acyl/malonyl transferase. Catalysis depends on serine 659, which acts as the For acyl/malonyl transferase activity. The interval 948–1070 (ISILGNSMQD…ANFQLYNNGK (123 aa)) is N-terminal hotdog fold. A PKS/mFAS DH domain is found at 948–1234 (ISILGNSMQD…CTSLTPVKDP (287 aa)). The active-site Proton acceptor; for dehydratase activity is the histidine 982. A C-terminal hotdog fold region spans residues 1085-1234 (NLSSIPWDKF…CTSLTPVKDP (150 aa)). The Proton donor; for dehydratase activity role is filled by aspartate 1148. A Carrier domain is found at 2299–2376 (KNSTNIKDKF…MVCQIINDNF (78 aa)). The residue at position 2336 (serine 2336) is an O-(pantetheine 4'-phosphoryl)serine.

Pantetheine 4'-phosphate is required as a cofactor.

Probable polyketide synthase. In Dictyostelium discoideum (Social amoeba), this protein is Probable polyketide synthase 25 (pks25).